The sequence spans 99 residues: MTLFSSISSISNPMTSSKSSISSFGSGTSMGSNTVACGGGCGGSGGILGLGLGLGLGLDLTGGSRSRGACGGNGGNRGNGNGGMGGGNGPCCGGCCCGI.

Residues 1 to 29 (MTLFSSISSISNPMTSSKSSISSFGSGTS) form a disordered region.

This sequence belongs to the hssA/B family.

In Dictyostelium discoideum (Social amoeba), this protein is HssA/B-like protein 41 (hssl41).